Consider the following 237-residue polypeptide: Platelet-aggregating proteinase PA-BJ (237 aa).

A propeptide spanning residues 1-5 (NSLVI) is cleaved from the precursor. The Peptidase S1 domain maps to 6–229 (VVGGRPCKIN…YLPWIESIIA (224 aa)). 6 cysteine pairs are disulfide-bonded: Cys12–Cys144, Cys31–Cys47, Cys79–Cys236, Cys123–Cys191, Cys155–Cys170, and Cys181–Cys205. N-linked (GlcNAc...) asparagine glycosylation is present at Asn25. Ser28 carries an O-linked (GalNAc...) serine glycan. Catalysis depends on charge relay system residues His46 and Asp91. Ser185 functions as the Charge relay system in the catalytic mechanism.

Belongs to the peptidase S1 family. Snake venom subfamily. Monomer. In terms of tissue distribution, expressed by the venom gland.

It localises to the secreted. Its activity is regulated as follows. Inhibited by PMSF. The amidolytic activity is also inhibited by benzamidine derivatives. Its function is as follows. Snake venom serine protease that induces platelet aggregation through activation of protease-activated platelet receptors (PAR1/F2R and PAR4/F2RL3). On F2R, the cleavage occurs at Arg41-Ser42 (like thrombin cleavage), and Arg46-Asn47. In normal condition of hemostasis, the cleavage of the Arg41-Ser42 bond liberates a new N-terminus that functions as an agonist. However after envenomation, the cleavage of Arg46-Asn47 bond degrades this potential agonist. This may explain why the snake protease is less potent than thrombin in causing platelet aggregation and release reaction. On F2RL3, a thrombin-like activity has also been proven by calcium release from lung fibroblasts transfected with this receptor. Possesses amidolytic activities. This Bothrops jararaca (Jararaca) protein is Platelet-aggregating proteinase PA-BJ.